A 459-amino-acid polypeptide reads, in one-letter code: VGFKAGVKDYKLTYYTPDYETKDTDILAAFRVTPQPGVPPEEAGAAVAAESSTGTWTTVWTDGLTSLDRYKGRCYHIEPVAGEETQFIAYVAYPLDLFEEGSVTNMFTSIVGNVFGFKALRALRLEDLRIPTAYTKTFQGPPHGIQVERDKLNKYGRPLLGCTIKPKLGLSAKNYGRAVYECLRGGLDFTKDDENVNSQPFMRWRDRFLFCAEAIYKAQAETGEIKGHYLNATAGTCEDMMKRAVFARELGVPIVMHDYLTGGFTANTTLAHYCRDNGLLLHIHRAMHAVIDRQKNHGMHFRVLAKALRMSGGDHIHAGTVVGKLEGEREITLGFVDLLRDDFIEKDRSRGIYFTQDWVSLPGVLPVASGGIHVWHMPALTEIFGDDSVLQFGGGTLGHPWGNAPGAVANRVALEACVQARNEGRDLAREDNEIIREASKWSPELAAACEIWKEIKFEF.

The residue at position 4 (lysine 4) is an N6,N6,N6-trimethyllysine. Residues asparagine 113 and threonine 163 each contribute to the substrate site. The active-site Proton acceptor is lysine 165. Lysine 167 is a binding site for substrate. Mg(2+) is bound by residues lysine 191, aspartate 193, and glutamate 194. Lysine 191 is subject to N6-carboxylysine. Histidine 284 serves as the catalytic Proton acceptor. Arginine 285, histidine 317, and serine 369 together coordinate substrate.

This sequence belongs to the RuBisCO large chain family. Type I subfamily. As to quaternary structure, heterohexadecamer of 8 large chains and 8 small chains; disulfide-linked. The disulfide link is formed within the large subunit homodimers. Requires Mg(2+) as cofactor. The disulfide bond which can form in the large chain dimeric partners within the hexadecamer appears to be associated with oxidative stress and protein turnover.

The protein localises to the plastid. Its subcellular location is the chloroplast. The catalysed reaction is 2 (2R)-3-phosphoglycerate + 2 H(+) = D-ribulose 1,5-bisphosphate + CO2 + H2O. The enzyme catalyses D-ribulose 1,5-bisphosphate + O2 = 2-phosphoglycolate + (2R)-3-phosphoglycerate + 2 H(+). RuBisCO catalyzes two reactions: the carboxylation of D-ribulose 1,5-bisphosphate, the primary event in carbon dioxide fixation, as well as the oxidative fragmentation of the pentose substrate in the photorespiration process. Both reactions occur simultaneously and in competition at the same active site. The polypeptide is Ribulose bisphosphate carboxylase large chain (Nyssa ogeche (Ogeechee tupelo)).